The primary structure comprises 122 residues: Large ribosomal subunit protein uL14 (122 aa).

The protein belongs to the universal ribosomal protein uL14 family. In terms of assembly, part of the 50S ribosomal subunit. Forms a cluster with proteins L3 and L19. In the 70S ribosome, L14 and L19 interact and together make contacts with the 16S rRNA in bridges B5 and B8.

In terms of biological role, binds to 23S rRNA. Forms part of two intersubunit bridges in the 70S ribosome. This chain is Large ribosomal subunit protein uL14, found in Corynebacterium kroppenstedtii (strain DSM 44385 / JCM 11950 / CIP 105744 / CCUG 35717).